The primary structure comprises 127 residues: Large ribosomal subunit protein bL20 (127 aa).

This sequence belongs to the bacterial ribosomal protein bL20 family.

Its function is as follows. Binds directly to 23S ribosomal RNA and is necessary for the in vitro assembly process of the 50S ribosomal subunit. It is not involved in the protein synthesizing functions of that subunit. The polypeptide is Large ribosomal subunit protein bL20 (Corynebacterium diphtheriae (strain ATCC 700971 / NCTC 13129 / Biotype gravis)).